A 147-amino-acid chain; its full sequence is Augurin (147 aa).

An N-terminal signal peptide occupies residues 1–31 (MANSSARPAFLVMTALALLLLLCVGPGGISG). 2 consecutive propeptides follow at residues 32–68 (NKLK…LRRP) and 132–147 (SAHS…YDDY).

The protein belongs to the augurin family.

The protein localises to the secreted. Its subcellular location is the cytoplasm. It localises to the apical cell membrane. Probable hormone that may attenuate cell proliferation and induce senescence of oligodendrocyte and neural precursor cells in the central nervous system. ECRG4-induced senescence is characterized by G1 arrest, RB1 dephosphorylation and accelerated CCND1 and CCND3 proteasomal degradation. In Bos taurus (Bovine), this protein is Augurin.